A 225-amino-acid chain; its full sequence is MKKAVILVSGGADSATVLAIMREQGYEIHAISFNYGQRNNAELRKVTELVKEYNVKQHKIVNIDLRAFGGSALTDDDIKVPHYHDTKELPEDVPVTYVPARNTIFLSYALGFAEIIGAKDIFIGVHTSDSANYPDCRPEYIKSFEAMANLATNIGGVTIHTPLINMTKDQIIKTGLRLGVDYKNTISCYDPSEDDLSCGTCLACTIRLDAFKKNNVQDPINYILF.

8-18 (VSGGADSATVL) provides a ligand contact to ATP. Zn(2+)-binding residues include cysteine 188, cysteine 198, cysteine 201, and cysteine 204.

The protein belongs to the QueC family. It depends on Zn(2+) as a cofactor.

The catalysed reaction is 7-carboxy-7-deazaguanine + NH4(+) + ATP = 7-cyano-7-deazaguanine + ADP + phosphate + H2O + H(+). It participates in purine metabolism; 7-cyano-7-deazaguanine biosynthesis. Catalyzes the ATP-dependent conversion of 7-carboxy-7-deazaguanine (CDG) to 7-cyano-7-deazaguanine (preQ(0)). The polypeptide is 7-cyano-7-deazaguanine synthase (Rickettsia bellii (strain OSU 85-389)).